A 487-amino-acid polypeptide reads, in one-letter code: MAYSKITLLAALAAIAYAQTQAQINELNVVLDDVKTNIADYITLSYTPNSGFSLDQMPAGIMDIAAQLVANPSDDSYTTLYSEVDFSAVEHMLTMVPWYSSRLLPELEAMDASLTTSSSAATSSSEVASSSIASSTSSSVAPSSSEVVSSSVAPSSSEVVSSSVAPSSSEVVSSSVASSSSEVASSSVAPSSSEVVSSSVASSSSEVASSSVAPSSSEVVSSSVAPSSSEVVSSSVASSSSEVASSSVAPSSSEVVSSSVASSTSEATSSSAVTSSSAVSSSTESVSSSSVSSSSAVSSSEAVSSSPVSSVVSSSAGPASSSVAPYNSTIASSSSTAQTSISTIAPYNSTTTTTPASSASSVIISTRNGTTVTETDNTLVTKETTVCDYSSTSAVPASTTGYNNSTKVSTATICSTCKEGTSTATDFSTLKTTVTVCDSACQAKKSATVVSVQSKTTGIVEQTENGAAKAVIGMGAGALAAVAAMLL.

The first 22 residues, 1 to 22 (MAYSKITLLAALAAIAYAQTQA), serve as a signal peptide directing secretion. Tandem repeats lie at residues 137-148 (SSSVAPSSSEVV), 149-160 (SSSVAPSSSEVV), 161-172 (SSSVAPSSSEVV), 173-184 (SSSVASSSSEVA), 185-196 (SSSVAPSSSEVV), 197-208 (SSSVASSSSEVA), 209-220 (SSSVAPSSSEVV), 221-232 (SSSVAPSSSEVV), 233-244 (SSSVASSSSEVA), 245-256 (SSSVAPSSSEVV), and 257-268 (SSSVASSTSEAT). Residues 137–268 (SSSVAPSSSE…SVASSTSEAT (132 aa)) are 11 X 12 AA approximate tandem repeats, Ser-rich. The tract at residues 206-299 (EVASSSVAPS…SVSSSSAVSS (94 aa)) is disordered. Residues Asn-327, Asn-348, Asn-368, Asn-403, and Asn-404 are each glycosylated (N-linked (GlcNAc...) asparagine). Asn-465 carries the GPI-anchor amidated asparagine lipid modification. A propeptide spans 466 to 487 (GAAKAVIGMGAGALAAVAAMLL) (removed in mature form).

Belongs to the SRP1/TIP1 family. The GPI-anchor is attached to the protein in the endoplasmic reticulum and serves to target the protein to the cell surface. There, the glucosamine-inositol phospholipid moiety is cleaved off and the GPI-modified mannoprotein is covalently attached via its lipidless GPI glycan remnant to the 1,6-beta-glucan of the outer cell wall layer.

It is found in the secreted. It localises to the cell wall. The protein localises to the membrane. Its function is as follows. Component of the cell wall. Required for anaerobic growth. The polypeptide is Cell wall protein TIR4 (TIR4) (Saccharomyces cerevisiae (strain ATCC 204508 / S288c) (Baker's yeast)).